A 246-amino-acid chain; its full sequence is Phosphonates import ATP-binding protein PhnC (246 aa).

The ABC transporter domain occupies 2–246; it reads IKFENVSKIY…ILDEVYRKEA (245 aa). 35–42 is a binding site for ATP; the sequence is GTSGAGKS.

The protein belongs to the ABC transporter superfamily. Phosphonates importer (TC 3.A.1.9.1) family. As to quaternary structure, the complex is composed of two ATP-binding proteins (PhnC), two transmembrane proteins (PhnE) and a solute-binding protein (PhnD).

It localises to the cell membrane. It catalyses the reaction phosphonate(out) + ATP + H2O = phosphonate(in) + ADP + phosphate + H(+). Its function is as follows. Part of the ABC transporter complex PhnCDE involved in phosphonates import. Responsible for energy coupling to the transport system. This Lactococcus lactis subsp. lactis (strain IL1403) (Streptococcus lactis) protein is Phosphonates import ATP-binding protein PhnC.